Here is a 129-residue protein sequence, read N- to C-terminus: Glycine cleavage system H protein (129 aa).

A Lipoyl-binding domain is found at 24-106 (LIRVGISAFA…HGAGWLLVVR (83 aa)). An N6-lipoyllysine modification is found at K65.

Belongs to the GcvH family. In terms of assembly, the glycine cleavage system is composed of four proteins: P, T, L and H. Requires (R)-lipoate as cofactor.

Functionally, the glycine cleavage system catalyzes the degradation of glycine. The H protein shuttles the methylamine group of glycine from the P protein to the T protein. The chain is Glycine cleavage system H protein from Synechococcus sp. (strain CC9902).